A 147-amino-acid chain; its full sequence is Leghemoglobin 3 (147 aa).

The Globin domain maps to 2–147 (GFTAQQEALV…LATAIKKAMG (146 aa)). Y30 is modified (nitrated tyrosine). Residue S45 participates in heme b binding. The residue at position 45 (S45) is a Phosphoserine. O2 is bound at residue H61. Residues K64, H93, and K96 each contribute to the heme b site. Y135 bears the Nitrated tyrosine mark.

Belongs to the plant globin family. Monomer. Post-translationally, nitrated in effective nodules and particularly in hypoxic conditions; this mechanism may play a protective role in the symbiosis by buffering toxic peroxynitrite NO(2)(-). Nitration level decrease during nodule senescence. In terms of processing, phosphorylation at Ser-45 disrupts the molecular environment of its porphyrin ring oxygen binding pocket, thus leading to a reduced oxygen consumption and to the delivery of oxygen O(2) to symbiosomes. In terms of tissue distribution, specifically and strongly expressed in root nodules and at low levels in seedlings.

The protein resides in the cytoplasm. The protein localises to the cytosol. It is found in the nucleus. Leghemoglobin that reversibly binds oxygen O(2) through a pentacoordinated heme iron. In root nodules, facilitates the diffusion of oxygen to the bacteroids while preventing the bacterial nitrogenase from being inactivated by buffering dioxygen, nitric oxide and carbon monoxide, and promoting the formation of reactive oxygen species (ROS, e.g. H(2)O(2)). This role is essential for symbiotic nitrogen fixation (SNF). The sequence is that of Leghemoglobin 3 from Lotus japonicus (Lotus corniculatus var. japonicus).